Reading from the N-terminus, the 675-residue chain is Protein REPRESSOR OF VERNALIZATION 1 (675 aa).

Residues 1 to 143 form a disordered region; it reads MGRRRRFTQQ…DPVKVTGKGK (143 aa). Residues 22-31 show a composition bias toward low complexity; the sequence is AEPPKTAKPA. Over residues 48-70 the composition is skewed to acidic residues; sequence EEEDEDEEDELELEDEEDDEKDL. Over residues 71-86 the composition is skewed to basic and acidic residues; that stretch reads EEMRRNEEEERREETR. The Nuclear localization signal motif lies at 73-80; that stretch reads MRRNEEEE. Over residues 87 to 96 the composition is skewed to basic residues; it reads TRRRRGRKPK. The span at 113–127 shows a compositional bias: acidic residues; the sequence is SDEEEEEEVREEDST. The 119-residue stretch at 157–275 folds into the BAH domain; the sequence is NTFELEDPVL…TVAKKLWNLT (119 aa). 3 disordered regions span residues 300-349, 493-512, and 587-675; these read ELPD…KPET, GLTPAEKTSEPEESRRLQMT, and LASP…ADHE. Composition is skewed to basic and acidic residues over residues 333–346, 499–512, and 613–627; these read VSRDATGKSEHFVK, KTSEPEESRRLQMT, and KLEKQKSFTKPKPEE. Residues 372 to 518 enclose the TFIIS central domain; it reads YRDKWLDKLL…LQMTDARCER (147 aa).

Expressed constitutively.

It localises to the nucleus. In terms of biological role, component of a grass-specific mechanism of vernalization, a process by which prolonged cold exposure provides competence to flower in daylengths longer than 12 hours. Negative regulator of flowering required for vernalization establishment by repressing VRN1 before vernalization and in the fall season. This chain is Protein REPRESSOR OF VERNALIZATION 1, found in Brachypodium distachyon (Purple false brome).